The chain runs to 319 residues: Probable deoxyhypusine synthase (319 aa).

The active-site Nucleophile is lysine 287.

The protein belongs to the deoxyhypusine synthase family. The cofactor is NAD(+).

It catalyses the reaction [eIF5A protein]-L-lysine + spermidine = [eIF5A protein]-deoxyhypusine + propane-1,3-diamine. It functions in the pathway protein modification; eIF5A hypusination. Its function is as follows. Catalyzes the NAD-dependent oxidative cleavage of spermidine and the subsequent transfer of the butylamine moiety of spermidine to the epsilon-amino group of a specific lysine residue of the eIF-5A precursor protein to form the intermediate deoxyhypusine residue. This is Probable deoxyhypusine synthase from Ignicoccus hospitalis (strain KIN4/I / DSM 18386 / JCM 14125).